The sequence spans 250 residues: Putative inactive flavonol synthase 2 (250 aa).

In terms of domain architecture, Fe2OG dioxygenase spans 171–250; sequence TEYVMRINNY…EQWKVQECVA (80 aa). Positions 195 and 197 each coordinate Fe cation.

It belongs to the iron/ascorbate-dependent oxidoreductase family.

The polypeptide is Putative inactive flavonol synthase 2 (FLS2) (Arabidopsis thaliana (Mouse-ear cress)).